Reading from the N-terminus, the 160-residue chain is Large ribosomal subunit protein uL30m (160 aa).

The N-terminal 34 residues, 1–34 (MAGVLRSVFQRPPGRLQTVKKGAESLIGTEWIRH), are a transit peptide targeting the mitochondrion. Positions 45–64 (VFQPRPEDHEKYGGDPQNPH) are disordered.

The protein belongs to the universal ribosomal protein uL30 family. Component of the mitochondrial ribosome large subunit (39S) which comprises a 16S rRNA and about 50 distinct proteins.

It localises to the mitochondrion. This is Large ribosomal subunit protein uL30m (Mrpl30) from Rattus norvegicus (Rat).